The following is a 290-amino-acid chain: Nucleotide-binding protein XF_1405 (290 aa).

13–20 (GLSGSGKS) serves as a coordination point for ATP. 65–68 (DIRS) is a GTP binding site.

It belongs to the RapZ-like family.

Functionally, displays ATPase and GTPase activities. The polypeptide is Nucleotide-binding protein XF_1405 (Xylella fastidiosa (strain 9a5c)).